A 242-amino-acid chain; its full sequence is Ribonuclease PH (242 aa).

Residues Arg86 and 124 to 126 (GTR) each bind phosphate.

It belongs to the RNase PH family. As to quaternary structure, homohexameric ring arranged as a trimer of dimers.

It carries out the reaction tRNA(n+1) + phosphate = tRNA(n) + a ribonucleoside 5'-diphosphate. In terms of biological role, phosphorolytic 3'-5' exoribonuclease that plays an important role in tRNA 3'-end maturation. Removes nucleotide residues following the 3'-CCA terminus of tRNAs; can also add nucleotides to the ends of RNA molecules by using nucleoside diphosphates as substrates, but this may not be physiologically important. Probably plays a role in initiation of 16S rRNA degradation (leading to ribosome degradation) during starvation. The polypeptide is Ribonuclease PH (Bacillus pumilus (strain SAFR-032)).